A 317-amino-acid polypeptide reads, in one-letter code: Ribosomal protein L11 methyltransferase (317 aa).

The S-adenosyl-L-methionine site is built by threonine 158, glycine 179, aspartate 201, and asparagine 244.

This sequence belongs to the methyltransferase superfamily. PrmA family.

The protein resides in the cytoplasm. The catalysed reaction is L-lysyl-[protein] + 3 S-adenosyl-L-methionine = N(6),N(6),N(6)-trimethyl-L-lysyl-[protein] + 3 S-adenosyl-L-homocysteine + 3 H(+). Functionally, methylates ribosomal protein L11. The chain is Ribosomal protein L11 methyltransferase from Streptococcus thermophilus (strain CNRZ 1066).